Reading from the N-terminus, the 299-residue chain is Tyrosine recombinase XerC (299 aa).

A Core-binding (CB) domain is found at 1–85 (MKRQLEAYCA…AVRGLYRYLN (85 aa)). A Tyr recombinase domain is found at 106–285 (RLPKVLDTDR…DFQHLAAVYD (180 aa)). Catalysis depends on residues Arg-146, Lys-170, His-237, Arg-240, and His-263. The active-site O-(3'-phospho-DNA)-tyrosine intermediate is Tyr-272.

The protein belongs to the 'phage' integrase family. XerC subfamily. In terms of assembly, forms a cyclic heterotetrameric complex composed of two molecules of XerC and two molecules of XerD.

Its subcellular location is the cytoplasm. Site-specific tyrosine recombinase, which acts by catalyzing the cutting and rejoining of the recombining DNA molecules. The XerC-XerD complex is essential to convert dimers of the bacterial chromosome into monomers to permit their segregation at cell division. It also contributes to the segregational stability of plasmids. The chain is Tyrosine recombinase XerC from Pseudomonas putida (strain ATCC 47054 / DSM 6125 / CFBP 8728 / NCIMB 11950 / KT2440).